The sequence spans 308 residues: Aspartate carbamoyltransferase catalytic subunit (308 aa).

2 residues coordinate carbamoyl phosphate: R51 and T52. K80 is a binding site for L-aspartate. Residues R101, H129, and Q132 each contribute to the carbamoyl phosphate site. Residues R162 and R224 each coordinate L-aspartate. Carbamoyl phosphate-binding residues include L263 and P264.

The protein belongs to the aspartate/ornithine carbamoyltransferase superfamily. ATCase family. In terms of assembly, heterododecamer (2C3:3R2) of six catalytic PyrB chains organized as two trimers (C3), and six regulatory PyrI chains organized as three dimers (R2).

It carries out the reaction carbamoyl phosphate + L-aspartate = N-carbamoyl-L-aspartate + phosphate + H(+). Its pathway is pyrimidine metabolism; UMP biosynthesis via de novo pathway; (S)-dihydroorotate from bicarbonate: step 2/3. Catalyzes the condensation of carbamoyl phosphate and aspartate to form carbamoyl aspartate and inorganic phosphate, the committed step in the de novo pyrimidine nucleotide biosynthesis pathway. The polypeptide is Aspartate carbamoyltransferase catalytic subunit (Bacteroides fragilis (strain ATCC 25285 / DSM 2151 / CCUG 4856 / JCM 11019 / LMG 10263 / NCTC 9343 / Onslow / VPI 2553 / EN-2)).